We begin with the raw amino-acid sequence, 494 residues long: Neuronal pentraxin receptor (494 aa).

Residues 1 to 2 (MK) are Cytoplasmic-facing. The helical; Signal-anchor for type II membrane protein transmembrane segment at 3 to 23 (FLAVLLAAGMLAFLGAVICII) threads the bilayer. The Extracellular segment spans residues 24–494 (ASVPLAASPA…FDVCKRRAKA (471 aa)). The interval 37–80 (PGGTDNASAASAAGAPGPQRSLSALQGAGGSAGPSVLPGEPAAS) is disordered. N-linked (GlcNAc...) asparagine glycosylation occurs at N42. Low complexity-rich tracts occupy residues 43-62 (ASAASAAGAPGPQRSLSALQ) and 69-80 (GPSVLPGEPAAS). N-linked (GlcNAc...) asparagine glycosylation is present at N211. Positions 286–488 (DAFKVSIPIR…GAKKAAFDVC (203 aa)) constitute a Pentraxin (PTX) domain. Residues C316 and C377 are joined by a disulfide bond. Positions 341, 419, 420, 421, and 431 each coordinate Ca(2+). N457 carries an N-linked (GlcNAc...) asparagine glycan.

In terms of assembly, interacts with KLHL2. Heteropentamer with NPTX1 and/or NPTX2. Also binds taipoxin-associated calcium-binding protein 49 (TCBP49/RCN2). Requires Ca(2+) as cofactor. In terms of processing, N-glycosylated. Post-translationally, ubiquitinated by a cullin-RING-based BCR (BTB-CUL3-RBX1) E3 ubiquitin-protein ligase complex containing KLHL2. In terms of tissue distribution, brain specific.

The protein localises to the membrane. May be involved in mediating uptake of synaptic material during synapse remodeling or in mediating the synaptic clustering of AMPA glutamate receptors at a subset of excitatory synapses. The polypeptide is Neuronal pentraxin receptor (Nptxr) (Rattus norvegicus (Rat)).